We begin with the raw amino-acid sequence, 492 residues long: Anthranilate synthase component 1 (492 aa).

L-tryptophan-binding positions include Ser-48 and 273–275 (PYM). 308–309 (GT) is a binding site for chorismate. Residue Glu-335 participates in Mg(2+) binding. Chorismate-binding positions include Tyr-423, Arg-443, 457 to 459 (GGG), and Gly-459. Residue Glu-472 participates in Mg(2+) binding.

It belongs to the anthranilate synthase component I family. As to quaternary structure, heterotetramer consisting of two non-identical subunits: a beta subunit (TrpG) and a large alpha subunit (TrpE). Requires Mg(2+) as cofactor.

The catalysed reaction is chorismate + L-glutamine = anthranilate + pyruvate + L-glutamate + H(+). It functions in the pathway amino-acid biosynthesis; L-tryptophan biosynthesis; L-tryptophan from chorismate: step 1/5. With respect to regulation, feedback inhibited by tryptophan. Its function is as follows. Part of a heterotetrameric complex that catalyzes the two-step biosynthesis of anthranilate, an intermediate in the biosynthesis of L-tryptophan. In the first step, the glutamine-binding beta subunit (TrpG) of anthranilate synthase (AS) provides the glutamine amidotransferase activity which generates ammonia as a substrate that, along with chorismate, is used in the second step, catalyzed by the large alpha subunit of AS (TrpE) to produce anthranilate. In the absence of TrpG, TrpE can synthesize anthranilate directly from chorismate and high concentrations of ammonia. The chain is Anthranilate synthase component 1 from Pseudomonas aeruginosa (strain ATCC 15692 / DSM 22644 / CIP 104116 / JCM 14847 / LMG 12228 / 1C / PRS 101 / PAO1).